We begin with the raw amino-acid sequence, 55 residues long: Small ribosomal subunit protein eS31 (55 aa).

Zn(2+) contacts are provided by C27, C30, C45, and C48. A C4-type zinc finger spans residues 27-48; sequence CSRCGKGFFMAQHKDRRSCGKC.

Belongs to the eukaryotic ribosomal protein eS31 family. As to quaternary structure, part of the 30S ribosomal subunit. The cofactor is Zn(2+).

This chain is Small ribosomal subunit protein eS31, found in Cenarchaeum symbiosum (strain A).